The sequence spans 255 residues: Trans-aconitate 2-methyltransferase (255 aa).

The protein belongs to the methyltransferase superfamily. Tam family.

It localises to the cytoplasm. The enzyme catalyses trans-aconitate + S-adenosyl-L-methionine = (E)-3-(methoxycarbonyl)pent-2-enedioate + S-adenosyl-L-homocysteine. Functionally, catalyzes the S-adenosylmethionine monomethyl esterification of trans-aconitate. This Mycolicibacterium gilvum (strain PYR-GCK) (Mycobacterium gilvum (strain PYR-GCK)) protein is Trans-aconitate 2-methyltransferase.